We begin with the raw amino-acid sequence, 300 residues long: 3-dehydrocarnitine:acetyl-CoA trimethylamine transferase (300 aa).

3 residues coordinate Zn(2+): His51, His53, and Glu254.

It belongs to the BKACE family. As to quaternary structure, homotetramer. Zn(2+) serves as cofactor.

It carries out the reaction 3-dehydrocarnitine + acetyl-CoA = N,N,N-trimethylglycyl-CoA + acetoacetate. Its pathway is amine and polyamine metabolism; carnitine metabolism. In terms of biological role, catalyzes the condensation of dehydrocarnitine and acetyl-CoA, forming acetoacetate and betainyl-CoA (N,N,N-trimethylglycyl-CoA). Is involved in a L-carnitine degradation pathway that allows R.meliloti to grow on L-carnitine as the sole source of carbon and nitrogen. This chain is 3-dehydrocarnitine:acetyl-CoA trimethylamine transferase, found in Rhizobium meliloti (strain 1021) (Ensifer meliloti).